The following is a 342-amino-acid chain: 3-isopropylmalate dehydrogenase (342 aa).

Residues Arg92, Arg102, Arg126, and Asp216 each contribute to the substrate site. Residues Asp216, Asp240, and Asp244 each contribute to the Mg(2+) site. Gly276–Asp288 is a binding site for NAD(+).

The protein belongs to the isocitrate and isopropylmalate dehydrogenases family. LeuB type 2 subfamily. Homodimer. Mg(2+) is required as a cofactor. Requires Mn(2+) as cofactor.

It is found in the cytoplasm. It carries out the reaction (2R,3S)-3-isopropylmalate + NAD(+) = 4-methyl-2-oxopentanoate + CO2 + NADH. It functions in the pathway amino-acid biosynthesis; L-leucine biosynthesis; L-leucine from 3-methyl-2-oxobutanoate: step 3/4. Catalyzes the oxidation of 3-carboxy-2-hydroxy-4-methylpentanoate (3-isopropylmalate) to 3-carboxy-4-methyl-2-oxopentanoate. The product decarboxylates to 4-methyl-2 oxopentanoate. In Corynebacterium kroppenstedtii (strain DSM 44385 / JCM 11950 / CIP 105744 / CCUG 35717), this protein is 3-isopropylmalate dehydrogenase.